Here is a 197-residue protein sequence, read N- to C-terminus: Putative NADH dehydrogenase/NAD(P)H nitroreductase Lcho_1290 (197 aa).

The protein belongs to the nitroreductase family. HadB/RutE subfamily. FMN serves as cofactor.

The sequence is that of Putative NADH dehydrogenase/NAD(P)H nitroreductase Lcho_1290 from Leptothrix cholodnii (strain ATCC 51168 / LMG 8142 / SP-6) (Leptothrix discophora (strain SP-6)).